The chain runs to 322 residues: Serine protease 38 (322 aa).

The N-terminal stretch at 1–28 (MAALTSGLGVLGYLLFPLLLASPTWVTS) is a signal peptide. Positions 29–55 (VSRRHPKSQANSLSGDVACGQPVLQGK) are cleaved as a propeptide — activation peptide. The 234-residue stretch at 56 to 289 (LLGGEFARDR…FLSWIRYHLQ (234 aa)) folds into the Peptidase S1 domain. Cys81 and Cys97 form a disulfide bridge. Active-site charge relay system residues include His96 and Asp146. Asn176 is a glycosylation site (N-linked (GlcNAc...) asparagine). 3 cysteine pairs are disulfide-bonded: Cys179-Cys247, Cys210-Cys226, and Cys237-Cys265. Catalysis depends on Ser241, which acts as the Charge relay system. N-linked (GlcNAc...) asparagine glycosylation is found at Asn250 and Asn276.

This sequence belongs to the peptidase S1 family.

Its subcellular location is the secreted. In Mus musculus (Mouse), this protein is Serine protease 38 (Prss38).